The sequence spans 445 residues: Phosphoglucosamine mutase (445 aa).

The active-site Phosphoserine intermediate is the S99. Mg(2+)-binding residues include S99, D242, D244, and D246. S99 is subject to Phosphoserine.

The protein belongs to the phosphohexose mutase family. Mg(2+) is required as a cofactor. In terms of processing, activated by phosphorylation.

The catalysed reaction is alpha-D-glucosamine 1-phosphate = D-glucosamine 6-phosphate. Functionally, catalyzes the conversion of glucosamine-6-phosphate to glucosamine-1-phosphate. The chain is Phosphoglucosamine mutase from Campylobacter jejuni subsp. jejuni serotype O:2 (strain ATCC 700819 / NCTC 11168).